The following is a 434-amino-acid chain: Alpha-enolase (434 aa).

S40 contributes to the Mg(2+) binding site. Substrate-binding residues include H158 and E167. Catalysis depends on E210, which acts as the Proton donor. Positions 245, 293, and 318 each coordinate Mg(2+). Residues E293 and D318 each coordinate substrate. K343 (proton acceptor) is an active-site residue. Residues 370–373 (SHRS) and K394 each bind substrate.

The protein belongs to the enolase family. As to quaternary structure, homodimer. The cofactor is Mg(2+).

The protein resides in the cytoplasm. The catalysed reaction is (2R)-2-phosphoglycerate = phosphoenolpyruvate + H2O. The protein operates within carbohydrate degradation; glycolysis; pyruvate from D-glyceraldehyde 3-phosphate: step 4/5. The chain is Alpha-enolase from Alligator mississippiensis (American alligator).